The chain runs to 877 residues: Probable alpha/beta-glucosidase agdC (877 aa).

Residues 1 to 14 (MLGSLLLLAPLAGA) form the signal peptide. Residues N171, N293, and N373 are each glycosylated (N-linked (GlcNAc...) asparagine). D422 acts as the Nucleophile in catalysis. E425 is an active-site residue. Positions 432-476 (DPCTDPERYSSENNLPPAPPPVRSSSPRPLPGFPADFQPSSASRS) are disordered. The span at 447–463 (PPAPPPVRSSSPRPLPG) shows a compositional bias: pro residues. N-linked (GlcNAc...) asparagine glycosylation is present at N508. D573 serves as the catalytic Proton donor. N-linked (GlcNAc...) asparagine glycans are attached at residues N574, N610, and N744.

The protein belongs to the glycosyl hydrolase 31 family.

The protein localises to the secreted. The enzyme catalyses Hydrolysis of terminal, non-reducing (1-&gt;4)-linked alpha-D-glucose residues with release of alpha-D-glucose.. It catalyses the reaction Hydrolysis of terminal, non-reducing beta-D-glucosyl residues with release of beta-D-glucose.. Glucosidase involved in the degradation of cellulosic biomass. Has both alpha- and beta-glucosidase activity. The chain is Probable alpha/beta-glucosidase agdC (agdC) from Aspergillus oryzae (strain ATCC 42149 / RIB 40) (Yellow koji mold).